A 559-amino-acid polypeptide reads, in one-letter code: Dihydroxy-acid dehydratase (559 aa).

Asp80 serves as a coordination point for Mg(2+). Cys121 contributes to the [2Fe-2S] cluster binding site. Mg(2+) contacts are provided by Asp122 and Lys123. The residue at position 123 (Lys123) is an N6-carboxylysine. Cys194 lines the [2Fe-2S] cluster pocket. Glu447 provides a ligand contact to Mg(2+). The Proton acceptor role is filled by Ser473.

Belongs to the IlvD/Edd family. As to quaternary structure, homodimer. [2Fe-2S] cluster serves as cofactor. The cofactor is Mg(2+).

The catalysed reaction is (2R)-2,3-dihydroxy-3-methylbutanoate = 3-methyl-2-oxobutanoate + H2O. It catalyses the reaction (2R,3R)-2,3-dihydroxy-3-methylpentanoate = (S)-3-methyl-2-oxopentanoate + H2O. It participates in amino-acid biosynthesis; L-isoleucine biosynthesis; L-isoleucine from 2-oxobutanoate: step 3/4. Its pathway is amino-acid biosynthesis; L-valine biosynthesis; L-valine from pyruvate: step 3/4. Functionally, functions in the biosynthesis of branched-chain amino acids. Catalyzes the dehydration of (2R,3R)-2,3-dihydroxy-3-methylpentanoate (2,3-dihydroxy-3-methylvalerate) into 2-oxo-3-methylpentanoate (2-oxo-3-methylvalerate) and of (2R)-2,3-dihydroxy-3-methylbutanoate (2,3-dihydroxyisovalerate) into 2-oxo-3-methylbutanoate (2-oxoisovalerate), the penultimate precursor to L-isoleucine and L-valine, respectively. This Chlorobium chlorochromatii (strain CaD3) protein is Dihydroxy-acid dehydratase.